The sequence spans 876 residues: Valine--tRNA ligase (876 aa).

Positions 44-54 match the 'HIGH' region motif; it reads PNVTGKLHLGH. The 'KMSKS' region motif lies at 520–524; sequence KMSKS. Residue Lys-523 participates in ATP binding. The stretch at 805-876 forms a coiled coil; it reads LEGLIDMDKE…VKARIEQLKA (72 aa).

The protein belongs to the class-I aminoacyl-tRNA synthetase family. ValS type 1 subfamily. Monomer.

Its subcellular location is the cytoplasm. It carries out the reaction tRNA(Val) + L-valine + ATP = L-valyl-tRNA(Val) + AMP + diphosphate. Catalyzes the attachment of valine to tRNA(Val). As ValRS can inadvertently accommodate and process structurally similar amino acids such as threonine, to avoid such errors, it has a 'posttransfer' editing activity that hydrolyzes mischarged Thr-tRNA(Val) in a tRNA-dependent manner. This Staphylococcus aureus (strain bovine RF122 / ET3-1) protein is Valine--tRNA ligase.